The chain runs to 435 residues: MSIITDVYAREVLDSRGNPTLEVEVYTESGAFGRGMVPSGASTGEHEAVELRDGDKSRYLGLGTQKAVDNVNNIIAEAIIGYDVRDQQAIDRAMIALDGTPNKGKLGANAILGVSIAVARAAADYLEVPLYTYLGGFNTKVLPTPMMNIINGGSHSDAPIAFQEFMIMPVGAPTFKEGLRWGAEVFHALKKILKERGLVTAVGDEGGFAPKFEGTEDGVETILKAIEAAGYEAGENGIMIGFDCASSEFYDKERKVYDYTKFEGEGAAVRTSAEQVDYLEELVNKYPIITIEDGMDENDWDGWKVLTERLGKRVQLVGDDFFVTNTEYLARGIKENAANSILIKVNQIGTLTETFEAIEMAKEAGYTAVVSHRSGETEDSTIADIAVATNAGQIKTGSLSRTDRIAKYNQLLRIEDQLGEVAQYKGIKSFYNLKK.

2 residues coordinate substrate: His-155 and Glu-164. The Proton donor role is filled by Glu-205. Mg(2+) contacts are provided by Asp-243, Glu-292, and Asp-319. Residues Glu-292, Asp-319, Lys-344, 371 to 374 (SHRS), and Lys-395 each bind substrate. Lys-344 acts as the Proton acceptor in catalysis.

The protein belongs to the enolase family. As to quaternary structure, homooctamer. The cofactor is Mg(2+).

It localises to the cytoplasm. The protein resides in the secreted. It is found in the cell surface. The catalysed reaction is (2R)-2-phosphoglycerate = phosphoenolpyruvate + H2O. The protein operates within carbohydrate degradation; glycolysis; pyruvate from D-glyceraldehyde 3-phosphate: step 4/5. Functionally, catalyzes the reversible conversion of 2-phosphoglycerate (2-PG) into phosphoenolpyruvate (PEP). It is essential for the degradation of carbohydrates via glycolysis. 'Moonlights' as a plasminogen receptor and plasmin activator. Binds host (human) plasminogen in vitro; enhances the activity of host tissue-specific plasminogen activator (tPA). The sequence is that of Enolase from Streptococcus pyogenes serotype M1.